We begin with the raw amino-acid sequence, 271 residues long: S-adenosylmethionine decarboxylase proenzyme (271 aa).

S121 functions as the Schiff-base intermediate with substrate; via pyruvic acid in the catalytic mechanism. Residue S121 is modified to Pyruvic acid (Ser); by autocatalysis. The active-site Proton acceptor; for processing activity is H126. The Proton donor; for catalytic activity role is filled by C149.

It belongs to the prokaryotic AdoMetDC family. Type 2 subfamily. As to quaternary structure, heterooctamer of four alpha and four beta chains arranged as a tetramer of alpha/beta heterodimers. Pyruvate serves as cofactor. Is synthesized initially as an inactive proenzyme. Formation of the active enzyme involves a self-maturation process in which the active site pyruvoyl group is generated from an internal serine residue via an autocatalytic post-translational modification. Two non-identical subunits are generated from the proenzyme in this reaction, and the pyruvate is formed at the N-terminus of the alpha chain, which is derived from the carboxyl end of the proenzyme. The post-translation cleavage follows an unusual pathway, termed non-hydrolytic serinolysis, in which the side chain hydroxyl group of the serine supplies its oxygen atom to form the C-terminus of the beta chain, while the remainder of the serine residue undergoes an oxidative deamination to produce ammonia and the pyruvoyl group blocking the N-terminus of the alpha chain.

It catalyses the reaction S-adenosyl-L-methionine + H(+) = S-adenosyl 3-(methylsulfanyl)propylamine + CO2. It functions in the pathway amine and polyamine biosynthesis; S-adenosylmethioninamine biosynthesis; S-adenosylmethioninamine from S-adenosyl-L-methionine: step 1/1. Functionally, catalyzes the decarboxylation of S-adenosylmethionine to S-adenosylmethioninamine (dcAdoMet), the propylamine donor required for the synthesis of the polyamines spermine and spermidine from the diamine putrescine. The sequence is that of S-adenosylmethionine decarboxylase proenzyme from Clostridium beijerinckii (strain ATCC 51743 / NCIMB 8052) (Clostridium acetobutylicum).